A 179-amino-acid chain; its full sequence is Large ribosomal subunit protein uL16 (179 aa).

The tract at residues 147-179 (KASSASLANLDEDANSQTDDETSSSGSVATVES) is disordered. A compositionally biased stretch (acidic residues) spans 156–168 (LDEDANSQTDDET). Residues 169 to 179 (SSSGSVATVES) show a composition bias toward polar residues.

The protein belongs to the universal ribosomal protein uL16 family. As to quaternary structure, part of the 50S ribosomal subunit.

In terms of biological role, binds 23S rRNA and is also seen to make contacts with the A and possibly P site tRNAs. The chain is Large ribosomal subunit protein uL16 from Prochlorococcus marinus (strain MIT 9211).